The sequence spans 149 residues: D-aminoacyl-tRNA deacylase (149 aa).

The Gly-cisPro motif, important for rejection of L-amino acids motif lies at 137–138 (GP).

It belongs to the DTD family. Homodimer.

Its subcellular location is the cytoplasm. The enzyme catalyses glycyl-tRNA(Ala) + H2O = tRNA(Ala) + glycine + H(+). It catalyses the reaction a D-aminoacyl-tRNA + H2O = a tRNA + a D-alpha-amino acid + H(+). An aminoacyl-tRNA editing enzyme that deacylates mischarged D-aminoacyl-tRNAs. Also deacylates mischarged glycyl-tRNA(Ala), protecting cells against glycine mischarging by AlaRS. Acts via tRNA-based rather than protein-based catalysis; rejects L-amino acids rather than detecting D-amino acids in the active site. By recycling D-aminoacyl-tRNA to D-amino acids and free tRNA molecules, this enzyme counteracts the toxicity associated with the formation of D-aminoacyl-tRNA entities in vivo and helps enforce protein L-homochirality. In Clostridium tetani (strain Massachusetts / E88), this protein is D-aminoacyl-tRNA deacylase.